The chain runs to 181 residues: Early E3 20.3 kDa glycoprotein (181 aa).

4 N-linked (GlcNAc...) asparagine; by host glycosylation sites follow: asparagine 29, asparagine 57, asparagine 70, and asparagine 75.

This sequence belongs to the adenoviridae E3_20 family.

Functionally, E3 proteins seem to be dispensable for virus growth in tissue culture cells. They are potentially important for virus growth under special conditions; E3 region may help adenoviruses to evade the immune surveillance of the host. The polypeptide is Early E3 20.3 kDa glycoprotein (Homo sapiens (Human)).